The following is a 119-amino-acid chain: NAD(P)H-quinone oxidoreductase subunit M (119 aa).

This sequence belongs to the complex I NdhM subunit family. In terms of assembly, NDH-1 can be composed of about 15 different subunits; different subcomplexes with different compositions have been identified which probably have different functions.

The protein localises to the cellular thylakoid membrane. The catalysed reaction is a plastoquinone + NADH + (n+1) H(+)(in) = a plastoquinol + NAD(+) + n H(+)(out). It catalyses the reaction a plastoquinone + NADPH + (n+1) H(+)(in) = a plastoquinol + NADP(+) + n H(+)(out). Its function is as follows. NDH-1 shuttles electrons from an unknown electron donor, via FMN and iron-sulfur (Fe-S) centers, to quinones in the respiratory and/or the photosynthetic chain. The immediate electron acceptor for the enzyme in this species is believed to be plastoquinone. Couples the redox reaction to proton translocation, and thus conserves the redox energy in a proton gradient. Cyanobacterial NDH-1 also plays a role in inorganic carbon-concentration. The polypeptide is NAD(P)H-quinone oxidoreductase subunit M (Picosynechococcus sp. (strain ATCC 27264 / PCC 7002 / PR-6) (Agmenellum quadruplicatum)).